The sequence spans 191 residues: Fe/S biogenesis protein NfuA (191 aa).

The [4Fe-4S] cluster site is built by Cys-149 and Cys-152.

This sequence belongs to the NfuA family. In terms of assembly, homodimer. [4Fe-4S] cluster serves as cofactor.

In terms of biological role, involved in iron-sulfur cluster biogenesis. Binds a 4Fe-4S cluster, can transfer this cluster to apoproteins, and thereby intervenes in the maturation of Fe/S proteins. Could also act as a scaffold/chaperone for damaged Fe/S proteins. In Salmonella choleraesuis (strain SC-B67), this protein is Fe/S biogenesis protein NfuA.